A 345-amino-acid chain; its full sequence is Uroporphyrinogen decarboxylase (345 aa).

Substrate is bound by residues 24-28, aspartate 74, tyrosine 150, serine 205, and histidine 318; that span reads RQAGR.

Belongs to the uroporphyrinogen decarboxylase family. In terms of assembly, homodimer.

It localises to the cytoplasm. It catalyses the reaction uroporphyrinogen III + 4 H(+) = coproporphyrinogen III + 4 CO2. It functions in the pathway porphyrin-containing compound metabolism; protoporphyrin-IX biosynthesis; coproporphyrinogen-III from 5-aminolevulinate: step 4/4. Functionally, catalyzes the decarboxylation of four acetate groups of uroporphyrinogen-III to yield coproporphyrinogen-III. The sequence is that of Uroporphyrinogen decarboxylase from Dichelobacter nodosus (strain VCS1703A).